We begin with the raw amino-acid sequence, 114 residues long: UPF0339 protein plu2779 (114 aa).

2 consecutive repeat copies span residues 11 to 59 (TKNK…NFEI) and 62 to 110 (NKSG…VRDL).

This sequence belongs to the UPF0339 family. Duplicated subfamily.

The sequence is that of UPF0339 protein plu2779 from Photorhabdus laumondii subsp. laumondii (strain DSM 15139 / CIP 105565 / TT01) (Photorhabdus luminescens subsp. laumondii).